A 328-amino-acid chain; its full sequence is Protein-glutamine deamidase Cif (328 aa).

Positions 1–68 (MLEHGVMKIP…TNRTGENPMI (68 aa)) are disordered. A compositionally biased stretch (polar residues) spans 52 to 63 (RSSSISNTNRTG). Catalysis depends on residues Cys156, His211, and Gln231.

Belongs to the Cif family.

The protein localises to the secreted. Its subcellular location is the host nucleus. The enzyme catalyses L-glutaminyl-[protein] + H2O = L-glutamyl-[protein] + NH4(+). Functionally, protein-glutamine deamidase effector that inhibits the host cell cycle and other key cellular processes such as the actin network and programmed-cell death. Acts by mediating the side chain deamidation of 'Gln-40' of host NEDD8, converting it to glutamate, thereby abolishing the activity of cullin-RING-based E3 ubiquitin-protein ligase complexes (CRL complexes). Inactivation of CRL complexes prevents ubiquitination and subsequent degradation of the cyclin-dependent kinase inhibitors CDKN1A/p21 and CDKN1B/p27, leading to G1 and G2 cell cycle arrests in host cells. Deamidation of 'Gln-40' of host NEDD8 also triggers macrophage-specific programmed cell death. Also able to catalyze deamidation of 'Gln-40' of host ubiquitin in vitro; however, NEDD8 constitutes the preferred substrate in vivo. Also regulates the host NF-kappa-B signaling via activation of MAPK/ERK cascade: activation of host MAPK/ERK cascade is independent of CRL complexes inhibition, suggesting that Cif has other host protein targets than NEDD8. The polypeptide is Protein-glutamine deamidase Cif (Burkholderia pseudomallei (strain K96243)).